The primary structure comprises 457 residues: uncharacterized protein (457 aa).

Residues 5–63 (PVEEGQKFPLTIRRMGINGEGIGYFKKAVVFVPGAITGEEVVVEAVKVRDRFTEAKLNK) enclose the TRAM domain. 4 residues coordinate [4Fe-4S] cluster: Cys76, Cys82, Cys85, and Cys166. Residues Gln290, Tyr319, Asp340, and Asp388 each contribute to the S-adenosyl-L-methionine site. Cys415 acts as the Nucleophile in catalysis.

It belongs to the class I-like SAM-binding methyltransferase superfamily. RNA M5U methyltransferase family.

This is an uncharacterized protein from Listeria innocua serovar 6a (strain ATCC BAA-680 / CLIP 11262).